A 659-amino-acid polypeptide reads, in one-letter code: Serine/threonine-protein kinase StkP (659 aa).

Residues 1–342 (MIQIGKIFAG…PQAPKKHRFK (342 aa)) lie on the Cytoplasmic side of the membrane. Positions 12–273 (YRIVKQIGRG…EMYVDLSSSL (262 aa)) constitute a Protein kinase domain. ATP contacts are provided by residues 18–26 (IGRGGMADV) and Lys-42. Asp-136 serves as the catalytic Proton acceptor. A helical membrane pass occupies residues 343–363 (MRYLILLASLVLVAASLIWIL). Topologically, residues 364–659 (SRTPATIAIP…YKPKTTSATP (296 aa)) are extracellular. PASTA domains lie at 366–433 (TPAT…VVSS), 434–505 (GKQS…TVAK), 506–577 (KATT…TVAK), and 578–651 (KVTS…SIYK). The disordered stretch occupies residues 541 to 561 (EEESSESEPGTIMKQSPGAGT).

Belongs to the protein kinase superfamily. Ser/Thr protein kinase family. As to quaternary structure, homodimer. StkP forms dimers through its transmembrane and extracellular domains. Dimer formation likely promotes autophosphorylation activity and might be necessary for targeting StkP substrate. Autophosphorylation occurs predominantly at the threonine residue and weakly at the serine residue. Dephosphorylated by PhpP.

It is found in the cell membrane. It catalyses the reaction L-seryl-[protein] + ATP = O-phospho-L-seryl-[protein] + ADP + H(+). It carries out the reaction L-threonyl-[protein] + ATP = O-phospho-L-threonyl-[protein] + ADP + H(+). Its function is as follows. Protein kinase involved in signal transduction pathways that regulate various cellular processes. Likely senses intracellular peptidoglycan subunits present in the cell division septa of actively growing cells; thus, intracellular unlinked peptidoglycan may serve as the signal molecules that trigger StkP phosphorylation activity on a set of substrates. Plays a crucial role in the regulation of cell shape and cell division of S.pneumoniae through control of at least DivIVA activity. Is involved in competence triggering, and is required for the expression of the central competence operon comCDE. StkP also plays an important role for bacterial survival in vivo. Identified target substrates that are specifically phosphorylated by StkP in vivo, mainly on threonine residues, are DivIVA, GlmM, PpaC, MapZ, KhpB (also called EloR/Jag, shown in strains R6 and Rx1) and StkP itself. Autophosphorylated StkP is a substrate for the cotranscribed protein phosphatase PhpP (shown in the avirulent strain Rx / Cp1015); PhpP and StkP appear to constitute a functional signaling couple in vivo. The sequence is that of Serine/threonine-protein kinase StkP (stkP) from Streptococcus pneumoniae serotype 2 (strain D39 / NCTC 7466).